Here is a 167-residue protein sequence, read N- to C-terminus: Putative universal stress protein SSP1056 (167 aa).

The protein belongs to the universal stress protein A family.

It is found in the cytoplasm. The polypeptide is Putative universal stress protein SSP1056 (Staphylococcus saprophyticus subsp. saprophyticus (strain ATCC 15305 / DSM 20229 / NCIMB 8711 / NCTC 7292 / S-41)).